Consider the following 604-residue polypeptide: Ectonucleoside triphosphate diphosphohydrolase 7 (604 aa).

Residues 1–28 (MARISFSYLCPASWYFTVPTVSPFLRQR) are Cytoplasmic-facing. The helical transmembrane segment at 29-49 (VAFLGLFFISCLLLLMLIIDF) threads the bilayer. Residues 50 to 546 (RHWSASLPRD…QAHGSWFRLS (497 aa)) lie on the Vesicular side of the membrane. Glutamate 217 acts as the Proton acceptor in catalysis. N-linked (GlcNAc...) asparagine glycosylation is present at asparagine 330. Cysteines 448 and 477 form a disulfide. Residues 547-567 (FVYNHYLFFACILVVLLAIVL) form a helical membrane-spanning segment. Residues 568 to 604 (YLLRLRRIHHRQTRASAPLDLLWLEEVVPMMGVQVGP) lie on the Cytoplasmic side of the membrane.

The protein belongs to the GDA1/CD39 NTPase family. Ca(2+) serves as cofactor. Requires Mg(2+) as cofactor.

It is found in the cytoplasmic vesicle membrane. It carries out the reaction a ribonucleoside 5'-triphosphate + H2O = a ribonucleoside 5'-diphosphate + phosphate + H(+). The enzyme catalyses UTP + H2O = UDP + phosphate + H(+). The catalysed reaction is GTP + H2O = GDP + phosphate + H(+). It catalyses the reaction CTP + H2O = CDP + phosphate + H(+). Functionally, catalyzes the hydrolysis of nucleoside triphosphates and diphosphates in a calcium- or magnesium-dependent manner. Preferentially hydrolyzes nucleoside 5'-triphosphates, with substrate preference for UTP &gt; GTP &gt; CTP. Hydrolyzes ATP and nucleoside diphosphates only to a minor extent. In Pongo abelii (Sumatran orangutan), this protein is Ectonucleoside triphosphate diphosphohydrolase 7 (ENTPD7).